The following is a 238-amino-acid chain: Purine nucleoside phosphorylase DeoD-type (238 aa).

H5 provides a ligand contact to a purine D-ribonucleoside. Phosphate is bound by residues G21, R25, R44, and 88 to 91 (RIGS). A purine D-ribonucleoside is bound by residues 180–182 (EME) and 204–205 (SD). D205 (proton donor) is an active-site residue.

This sequence belongs to the PNP/UDP phosphorylase family. Homohexamer; trimer of homodimers.

The enzyme catalyses a purine D-ribonucleoside + phosphate = a purine nucleobase + alpha-D-ribose 1-phosphate. The catalysed reaction is a purine 2'-deoxy-D-ribonucleoside + phosphate = a purine nucleobase + 2-deoxy-alpha-D-ribose 1-phosphate. Functionally, catalyzes the reversible phosphorolytic breakdown of the N-glycosidic bond in the beta-(deoxy)ribonucleoside molecules, with the formation of the corresponding free purine bases and pentose-1-phosphate. The protein is Purine nucleoside phosphorylase DeoD-type of Xenorhabdus nematophila (strain ATCC 19061 / DSM 3370 / CCUG 14189 / LMG 1036 / NCIMB 9965 / AN6).